The chain runs to 514 residues: Bifunctional purine biosynthesis protein PurH (514 aa).

Residues 1–145 (MIKRALISVS…KNYQDVAVIV (145 aa)) enclose the MGS-like domain.

It belongs to the PurH family.

The enzyme catalyses (6R)-10-formyltetrahydrofolate + 5-amino-1-(5-phospho-beta-D-ribosyl)imidazole-4-carboxamide = 5-formamido-1-(5-phospho-D-ribosyl)imidazole-4-carboxamide + (6S)-5,6,7,8-tetrahydrofolate. It catalyses the reaction IMP + H2O = 5-formamido-1-(5-phospho-D-ribosyl)imidazole-4-carboxamide. Its pathway is purine metabolism; IMP biosynthesis via de novo pathway; 5-formamido-1-(5-phospho-D-ribosyl)imidazole-4-carboxamide from 5-amino-1-(5-phospho-D-ribosyl)imidazole-4-carboxamide (10-formyl THF route): step 1/1. It functions in the pathway purine metabolism; IMP biosynthesis via de novo pathway; IMP from 5-formamido-1-(5-phospho-D-ribosyl)imidazole-4-carboxamide: step 1/1. This is Bifunctional purine biosynthesis protein PurH from Ruminiclostridium cellulolyticum (strain ATCC 35319 / DSM 5812 / JCM 6584 / H10) (Clostridium cellulolyticum).